A 629-amino-acid polypeptide reads, in one-letter code: Acetylcholinesterase (629 aa).

A signal peptide spans 1 to 38; the sequence is MGQLSILCLFVTVCASVCGYSWPSDETTTKPSQFKDFH. Cys-103 and Cys-130 are oxidised to a cystine. The N-linked (GlcNAc...) asparagine glycan is linked to Asn-125. Ser-253 functions as the Acyl-ester intermediate in the catalytic mechanism. Cys-307 and Cys-322 are disulfide-bonded. The N-linked (GlcNAc...) asparagine glycan is linked to Asn-308. Glu-382 functions as the Charge relay system in the catalytic mechanism. An N-linked (GlcNAc...) asparagine glycan is attached at Asn-418. Cys-458 and Cys-574 are oxidised to a cystine. His-496 serves as the catalytic Charge relay system. Asn-509 carries N-linked (GlcNAc...) asparagine glycosylation. Ser-605 carries the GPI-anchor amidated serine lipid modification. The propeptide at 606–629 is removed in mature form; sequence SSNELLPPSTSLVLIWIMTLLNAL.

The protein belongs to the type-B carboxylesterase/lipase family. Homodimer; disulfide-linked. In terms of processing, the N-terminus is blocked.

The protein localises to the synapse. It localises to the cell membrane. It catalyses the reaction acetylcholine + H2O = choline + acetate + H(+). Rapidly hydrolyzes choline released into the synapse. The protein is Acetylcholinesterase of Leptinotarsa decemlineata (Colorado potato beetle).